The sequence spans 643 residues: Protein cueball (643 aa).

The signal sequence occupies residues 1–21 (MMIWVPALIFLSACLLPRSNG). Over 22 to 530 (TPLEWDFAVT…VCQTPFVWTS (509 aa)) the chain is Extracellular. N-linked (GlcNAc...) asparagine glycans are attached at residues N77 and N103. 3 LDL-receptor class B repeats span residues 116–163 (RNLF…DICR), 164–208 (RKLY…DQLS), and 209–254 (DRLF…TNDA). N-linked (GlcNAc...) asparagine glycosylation occurs at N172. The segment covering 276-290 (ATTTVRPEVESSTDG) has biased composition (polar residues). Positions 276–303 (ATTTVRPEVESSTDGTESESKQESEPVE) are disordered. N312 is a glycosylation site (N-linked (GlcNAc...) asparagine). EGF-like domains follow at residues 363–397 (RMDQ…SRCE), 398–429 (IREC…FTGE), and 432–470 (EVSN…ERCE). 7 disulfides stabilise this stretch: C372–C385, C387–C396, C401–C410, C405–C420, C436–C446, C440–C458, and C460–C469. N-linked (GlcNAc...) asparagine glycans are attached at residues N472 and N507. Residues 531-551 (SVIIILVVGIVFSLLLITTII) form a helical membrane-spanning segment. Over 552-643 (HGIRRLYKPK…LIHNMEDDLY (92 aa)) the chain is Cytoplasmic.

The protein belongs to the cueball family.

It localises to the cell membrane. Has a role in spermatogenesis and oogenesis. This is Protein cueball from Drosophila ananassae (Fruit fly).